The primary structure comprises 319 residues: Probable NAD(P)H-dependent D-xylose reductase xyl1 (319 aa).

The Proton donor role is filled by Y50. H112 lines the substrate pocket. Residues 166–167, 215–224, and 271–281 each bind NAD(+); these read SN, SSFGPLSFLE, and KSNNPARLLQN.

Belongs to the aldo/keto reductase family.

It catalyses the reaction xylitol + NAD(+) = D-xylose + NADH + H(+). It carries out the reaction xylitol + NADP(+) = D-xylose + NADPH + H(+). The protein operates within carbohydrate metabolism; D-xylose degradation. Catalyzes the initial reaction in the xylose utilization pathway by reducing D-xylose into xylitol. Xylose is a major component of hemicelluloses such as xylan. Most fungi utilize D-xylose via three enzymatic reactions, xylose reductase (XR), xylitol dehydrogenase (XDH), and xylulokinase, to form xylulose 5-phosphate, which enters pentose phosphate pathway. This is Probable NAD(P)H-dependent D-xylose reductase xyl1 (xyl1) from Emericella nidulans (strain FGSC A4 / ATCC 38163 / CBS 112.46 / NRRL 194 / M139) (Aspergillus nidulans).